We begin with the raw amino-acid sequence, 1009 residues long: DENN domain-containing protein 1A (1009 aa).

Residues Phe-13–Val-145 enclose the uDENN domain. One can recognise a cDENN domain in the interval Glu-162 to Lys-298. Positions Val-300–Gly-378 constitute a dDENN domain. Residues Phe-381–Phe-385 carry the FXDXF motif motif. The tract at residues Asp-453–Arg-564 is disordered. Residue Ser-473 is modified to Phosphoserine. A compositionally biased stretch (basic and acidic residues) spans Glu-477–Pro-489. Residues Pro-500 to Lys-509 show a composition bias toward basic residues. Phosphothreonine is present on Thr-519. Phosphoserine occurs at positions 520, 523, 536, 538, and 546. Residues Asp-569–Leu-578 carry the Clathrin box motif. Position 592 is a phosphoserine (Ser-592). The interval Ile-648 to Pro-714 is disordered. Residue Ser-749 is modified to Phosphoserine. Disordered regions lie at residues Ser-796 to Leu-831 and Arg-928 to Glu-1009. Pro residues-rich tracts occupy residues Ala-820–Leu-831 and Gly-945–Gly-957. Over residues Asp-972–Gln-983 the composition is skewed to basic and acidic residues. Positions Ser-986 to Ser-997 are enriched in low complexity. Basic and acidic residues predominate over residues Glu-999–Glu-1009.

In terms of assembly, interacts with RAB35. Interacts with clathrin and with the adapter protein complex 2, AP-2. Interacts with ITSN1 and SH3GL2. Interacts (when phosphorylated) with YWHAE. Post-translationally, phosphorylated on serine and/or threonine in an Akt-dependent manner. Phosphorylation probably regulates the guanine nucleotide exchange factor (GEF) activity, possibly by disrupting an intramolecular interaction between the DENN domain and the C-terminus of the protein, thereby relieving the autoinhibition.

It localises to the cytoplasmic vesicle. It is found in the clathrin-coated vesicle membrane. The protein localises to the presynaptic cell membrane. With respect to regulation, the guanine nucleotide exchange factor (GEF) activity is autoinhibited. Autoinhibition may be the result of intramolecular interaction between the DENN domain and the C-terminus, which is disrupted upon phosphorylation. Activation is regulated by Akt activation. Its function is as follows. Guanine nucleotide exchange factor (GEF) regulating clathrin-mediated endocytosis through RAB35 activation. Promotes the exchange of GDP to GTP, converting inactive GDP-bound RAB35 into its active GTP-bound form. Regulates clathrin-mediated endocytosis of synaptic vesicles and mediates exit from early endosomes. Binds phosphatidylinositol-phosphates (PtdInsPs), with some preference for PtdIns(3)P. The sequence is that of DENN domain-containing protein 1A from Homo sapiens (Human).